Here is a 1049-residue protein sequence, read N- to C-terminus: Cellulose synthase A catalytic subunit 4 [UDP-forming] (1049 aa).

Residues methionine 1–arginine 215 are Cytoplasmic-facing. 8 residues coordinate Zn(2+): cysteine 23, cysteine 26, cysteine 42, cysteine 45, cysteine 50, cysteine 53, cysteine 65, and cysteine 68. The RING-type; degenerate zinc-finger motif lies at cysteine 23–asparagine 69. The disordered stretch occupies residues lysine 76 to asparagine 98. The segment covering aspartate 84 to glutamate 96 has biased composition (acidic residues). Serine 135 bears the Phosphoserine mark. A helical membrane pass occupies residues isoleucine 216–proline 236. The Extracellular segment spans residues alanine 237–aspartate 239. The helical transmembrane segment at alanine 240–leucine 260 threads the bilayer. Over aspartate 261 to serine 831 the chain is Cytoplasmic. Serine 299, lysine 305, glutamate 306, and aspartate 335 together coordinate UDP-alpha-D-glucose. Aspartate 335 is a catalytic residue. Residues valine 389 to lysine 416 adopt a coiled-coil conformation. Lysine 476 is a UDP-alpha-D-glucose binding site. 2 residues coordinate Mn(2+): lysine 477 and aspartate 501. The active site involves aspartate 748. Residues isoleucine 832–isoleucine 852 form a helical membrane-spanning segment. Residues proline 853–asparagine 857 lie on the Extracellular side of the membrane. Residues phenylalanine 858–leucine 878 form a helical membrane-spanning segment. Topologically, residues arginine 879–tryptophan 895 are cytoplasmic. Residues valine 896–phenylalanine 916 traverse the membrane as a helical segment. Topologically, residues glycine 917–threonine 945 are extracellular. The N-linked (GlcNAc...) asparagine glycan is linked to asparagine 921. A helical membrane pass occupies residues threonine 946–valine 966. Topologically, residues serine 967–tryptophan 977 are cytoplasmic. The chain crosses the membrane as a helical span at residues glycine 978–leucine 998. Residues lysine 999–arginine 1007 lie on the Extracellular side of the membrane. The helical transmembrane segment at threonine 1008–valine 1028 threads the bilayer. The Cytoplasmic portion of the chain corresponds to arginine 1029–cysteine 1049.

It belongs to the glycosyltransferase 2 family. Plant cellulose synthase subfamily. As to quaternary structure, interacts with CESA7 and CESA8. Assembly with CESA7 and CESA8 is required for functional complex and localization in secondary cell wall deposition sites. Interacts with STL1 and STL2, but not with GOT1. Requires Zn(2+) as cofactor. It depends on Mn(2+) as a cofactor. S-acylated. In terms of tissue distribution, confined to secondary cell wall developing tissues such as xylems and interfascicular regions. Expressed in roots, hypocotyls, leaves, inflorescences and flowers.

It is found in the cell membrane. It carries out the reaction [(1-&gt;4)-beta-D-glucosyl](n) + UDP-alpha-D-glucose = [(1-&gt;4)-beta-D-glucosyl](n+1) + UDP + H(+). Its pathway is glycan metabolism; plant cellulose biosynthesis. Its function is as follows. Catalytic subunit of cellulose synthase terminal complexes ('rosettes'), required for beta-1,4-glucan microfibril crystallization, a major mechanism of the cell wall formation. Involved in the secondary cell wall formation. Required for the xylem cell wall thickening. The polypeptide is Cellulose synthase A catalytic subunit 4 [UDP-forming] (Arabidopsis thaliana (Mouse-ear cress)).